The primary structure comprises 608 residues: Protein SHQ1 homolog (608 aa).

Disordered stretches follow at residues 487-531 and 543-608; these read DAGS…SFYS and IVYE…ASTT. Residues 489-498 are compositionally biased toward low complexity; sequence GSQGSSPQQQ. Acidic residues-rich tracts occupy residues 502–524 and 543–579; these read DDLD…DESV and IVYE…EDDS. Residues 588-608 are compositionally biased toward polar residues; it reads EAEGNSVIEQCSNSETAASTT.

The protein belongs to the SHQ1 family.

Functionally, required for the quantitative accumulation of H/ACA ribonucleoproteins (RNPs). The polypeptide is Protein SHQ1 homolog (Drosophila melanogaster (Fruit fly)).